The following is an 85-amino-acid chain: METVLSFSAIAVAIIVGLCAVGTAIGFAVLGGKFLEGAARQPEMAPMLQVKMFIIAGLLDAVPMIGIVIALLFTFANPFVGQLAG.

2 helical membrane-spanning segments follow: residues 10 to 30 and 53 to 73; these read IAVA…FAVL and FIIA…ALLF.

Belongs to the ATPase C chain family. In terms of assembly, F-type ATPases have 2 components, F(1) - the catalytic core - and F(0) - the membrane proton channel. F(1) has five subunits: alpha(3), beta(3), gamma(1), delta(1), epsilon(1). F(0) has three main subunits: a(1), b(2) and c(10-14). The alpha and beta chains form an alternating ring which encloses part of the gamma chain. F(1) is attached to F(0) by a central stalk formed by the gamma and epsilon chains, while a peripheral stalk is formed by the delta and b chains.

Its subcellular location is the cell inner membrane. Its function is as follows. F(1)F(0) ATP synthase produces ATP from ADP in the presence of a proton or sodium gradient. F-type ATPases consist of two structural domains, F(1) containing the extramembraneous catalytic core and F(0) containing the membrane proton channel, linked together by a central stalk and a peripheral stalk. During catalysis, ATP synthesis in the catalytic domain of F(1) is coupled via a rotary mechanism of the central stalk subunits to proton translocation. In terms of biological role, key component of the F(0) channel; it plays a direct role in translocation across the membrane. A homomeric c-ring of between 10-14 subunits forms the central stalk rotor element with the F(1) delta and epsilon subunits. The chain is ATP synthase subunit c from Vibrio cholerae serotype O1 (strain ATCC 39315 / El Tor Inaba N16961).